The chain runs to 89 residues: uncharacterized protein (89 aa).

This is an uncharacterized protein from Borreliella burgdorferi (strain ATCC 35210 / DSM 4680 / CIP 102532 / B31) (Borrelia burgdorferi).